A 102-amino-acid polypeptide reads, in one-letter code: NADH-quinone oxidoreductase subunit K 1 (102 aa).

Transmembrane regions (helical) follow at residues 5–25 (LYEV…CVVA), 30–50 (VIMM…TFVG), and 62–82 (VFSL…LAMV).

This sequence belongs to the complex I subunit 4L family. In terms of assembly, NDH-1 is composed of 14 different subunits. Subunits NuoA, H, J, K, L, M, N constitute the membrane sector of the complex.

The protein localises to the cell inner membrane. The catalysed reaction is a quinone + NADH + 5 H(+)(in) = a quinol + NAD(+) + 4 H(+)(out). In terms of biological role, NDH-1 shuttles electrons from NADH, via FMN and iron-sulfur (Fe-S) centers, to quinones in the respiratory chain. The immediate electron acceptor for the enzyme in this species is believed to be ubiquinone. Couples the redox reaction to proton translocation (for every two electrons transferred, four hydrogen ions are translocated across the cytoplasmic membrane), and thus conserves the redox energy in a proton gradient. This chain is NADH-quinone oxidoreductase subunit K 1, found in Citrifermentans bemidjiense (strain ATCC BAA-1014 / DSM 16622 / JCM 12645 / Bem) (Geobacter bemidjiensis).